Here is a 230-residue protein sequence, read N- to C-terminus: uncharacterized protein (230 aa).

Transmembrane regions (helical) follow at residues 8 to 28 (SLIL…TMAF), 45 to 65 (SIIL…FIIF), 72 to 92 (LVLL…FLYL), 109 to 129 (PFSL…SVIS), 141 to 161 (IYVL…LLLA), 176 to 196 (MGIL…AIIF), and 203 to 223 (IYFL…LILF).

To P.aeruginosa PA0043 and M.thermoautotrophicum MTH1451.

The protein localises to the cell membrane. This is an uncharacterized protein from Aquifex aeolicus (strain VF5).